Reading from the N-terminus, the 386-residue chain is 23S rRNA (uracil(747)-C(5))-methyltransferase RlmC (386 aa).

Residues Cys7, Cys15, Cys18, and Cys94 each coordinate [4Fe-4S] cluster. S-adenosyl-L-methionine is bound by residues Gln219, Phe248, Glu269, and Asn316. Cys343 functions as the Nucleophile in the catalytic mechanism.

This sequence belongs to the class I-like SAM-binding methyltransferase superfamily. RNA M5U methyltransferase family. RlmC subfamily.

The catalysed reaction is uridine(747) in 23S rRNA + S-adenosyl-L-methionine = 5-methyluridine(747) in 23S rRNA + S-adenosyl-L-homocysteine + H(+). Its function is as follows. Catalyzes the formation of 5-methyl-uridine at position 747 (m5U747) in 23S rRNA. The sequence is that of 23S rRNA (uracil(747)-C(5))-methyltransferase RlmC from Shewanella oneidensis (strain ATCC 700550 / JCM 31522 / CIP 106686 / LMG 19005 / NCIMB 14063 / MR-1).